We begin with the raw amino-acid sequence, 507 residues long: Phosphoprotein (507 aa).

The interval 1-48 (MAEEQARHVKNGLECIRALKAEPIGSLAIEEAMAAWSEISDNPGQERA) is interaction with N0. Disordered regions lie at residues 40–100 (SDNP…PRNL), 134–163 (GLDG…TEGY), 201–232 (NNFP…KKGT), 250–273 (GATQ…GNVP), and 285–309 (WTPE…HYDD). Serine 86 carries the post-translational modification Phosphoserine. The segment covering 134–145 (GLDGDSTLSGGD) has biased composition (low complexity). Over residues 146 to 160 (NESENSDVDIGEPDT) the composition is skewed to acidic residues. Serine 151 carries the post-translational modification Phosphoserine. Positions 260–270 (SEPSGPGAPAG) are enriched in low complexity. Over residues 286-301 (TPESGTTISPRSQNNE) the composition is skewed to polar residues. The interval 304 to 376 (GDHYDDELFS…LSSIMIAIPG (73 aa)) is multimerization. Aspartate 314 is a binding site for Ca(2+). Interaction with the L polymerase regions lie at residues 361-377 (STLE…IPGL) and 396-410 (PIIG…AEVL). Positions 457–507 (GPASRSVIRSIIKSSRLEEDRKRYLMTLLDDIKGANDLAKFHQMLMKIIMK) are x domain (XD). The tract at residues 459–507 (ASRSVIRSIIKSSRLEEDRKRYLMTLLDDIKGANDLAKFHQMLMKIIMK) is interaction with the nucleocapsid (N-RNA).

It belongs to the morbillivirus P protein family. As to quaternary structure, homotetramer. Interacts (via multimerization domain and XD domain) with polymerase L; this interaction forms the polymerase L-P complex. Interacts (via N-terminus) with N0 (via Ncore); this interaction allows P to chaperon N0 to avoid N polymerization and non-specific RNA binding before encapsidation. Interacts (via C-terminus) with N-RNA template (via Ntail); this interaction maintains the P/L complex anchored to the nucleocapsid template during the sequential transcription. Interacts (via C-terminus) with protein C this interaction allows C to associate with the ribonucleocapsid. Phosphorylation on serines by host CK2 is necessary for the formation of viral factories.

Functionally, essential cofactor of the RNA polymerase L that plays a central role in the transcription and replication by forming the polymerase complex with RNA polymerase L and recruiting L to the genomic N-RNA template for RNA synthesis. Also plays a central role in the encapsidation of nascent RNA chains by forming the encapsidation complex with the nucleocapsid protein N (N-P complex). Acts as a chaperone for newly synthesized free N protein, so-called N0, allowing encapsidation of nascent RNA chains during replication. The nucleoprotein protein N prevents excessive phosphorylation of P, which leads to down-regulation of viral transcription/ replication. Participates, together with N, in the formation of viral factories (viroplasms), which are large inclusions in the host cytoplasm where replication takes place. The sequence is that of Phosphoprotein (P/V) from Measles virus (strain Edmonston B) (MeV).